The primary structure comprises 866 residues: Ribosome biogenesis protein BOP1 homolog (866 aa).

2 disordered regions span residues 1 to 180 (MVAN…EETR) and 214 to 241 (PPEAKSRFKGGKNQDEYAAGDTSDEEDI). 3 stretches are compositionally biased toward acidic residues: residues 37–52 (VDDESASDYYESDEEN), 60–146 (GNDE…LEEP), and 167–179 (TAEDEDEEDDEET). 6 WD repeats span residues 527–566 (GHTDMIRSVSIEPKGEYLVTGSDDQTVKIWEVSTARCIRT), 568–608 (PTGD…SLLV), 697–735 (KSKGLIQCVLFHPVKPCLFVATQRHVRVYDLVKQELLKK), 738–777 (PSCKWISSMAIHPKGDNLLVATYEKKMMWFDLDLSTRPYQ), 781–820 (LHHSAIRNVAFHLRYPLFASASDDRSVIVSHGMVYNDLLQ), and 836–866 (VNDFGAFDVVFHPTQPWLFSSGADNTVRLYT).

Belongs to the WD repeat BOP1/ERB1 family.

It localises to the nucleus. Its subcellular location is the nucleolus. The protein localises to the nucleoplasm. Required for maturation of ribosomal RNAs and formation of the large ribosomal subunit. The sequence is that of Ribosome biogenesis protein BOP1 homolog from Aedes aegypti (Yellowfever mosquito).